The chain runs to 220 residues: Protein DGCR6L (220 aa).

Residues 76–159 adopt a coiled-coil conformation; sequence KSLYNQRLRL…ADQQSTLEKA (84 aa).

The protein belongs to the gonadal family. As to expression, widely expressed in fetal and adult tissues. Highest expression in liver, heart and skeletal muscle. Lower levels in pancreas and placenta. Weak expression in brain.

It is found in the nucleus. May play a role in neural crest cell migration into the third and fourth pharyngeal pouches. This is Protein DGCR6L (DGCR6L) from Homo sapiens (Human).